The primary structure comprises 222 residues: Thymidylate kinase (222 aa).

Residue 10–17 (GLEGAGKS) participates in ATP binding.

The protein belongs to the thymidylate kinase family.

It catalyses the reaction dTMP + ATP = dTDP + ADP. Functionally, phosphorylation of dTMP to form dTDP in both de novo and salvage pathways of dTTP synthesis. This Alteromonas mediterranea (strain DSM 17117 / CIP 110805 / LMG 28347 / Deep ecotype) protein is Thymidylate kinase.